The sequence spans 160 residues: Phosphopantetheine adenylyltransferase (160 aa).

Serine 10 is a substrate binding site. ATP contacts are provided by residues 10-11 (SF) and histidine 18. Positions 42, 74, and 88 each coordinate substrate. ATP-binding positions include 89-91 (GLR), glutamate 99, and 124-130 (YSFISST).

This sequence belongs to the bacterial CoaD family. Homohexamer. It depends on Mg(2+) as a cofactor.

Its subcellular location is the cytoplasm. It catalyses the reaction (R)-4'-phosphopantetheine + ATP + H(+) = 3'-dephospho-CoA + diphosphate. It functions in the pathway cofactor biosynthesis; coenzyme A biosynthesis; CoA from (R)-pantothenate: step 4/5. Its function is as follows. Reversibly transfers an adenylyl group from ATP to 4'-phosphopantetheine, yielding dephospho-CoA (dPCoA) and pyrophosphate. The sequence is that of Phosphopantetheine adenylyltransferase from Leptospira interrogans serogroup Icterohaemorrhagiae serovar copenhageni (strain Fiocruz L1-130).